Consider the following 404-residue polypeptide: S-adenosylmethionine synthase (404 aa).

ATP is bound at residue His-17. Residue Asp-19 coordinates Mg(2+). Position 45 (Glu-45) interacts with K(+). Residues Glu-58 and Gln-101 each coordinate L-methionine. Residues 101 to 111 (QSPDINRGVDR) form a flexible loop region. Residues 172 to 174 (DAK), 246 to 247 (RF), Asp-255, 261 to 262 (RK), Ala-278, and Lys-282 contribute to the ATP site. L-methionine is bound at residue Asp-255. Lys-286 serves as a coordination point for L-methionine.

Belongs to the AdoMet synthase family. Homotetramer; dimer of dimers. The cofactor is Mg(2+). It depends on K(+) as a cofactor.

It localises to the cytoplasm. The catalysed reaction is L-methionine + ATP + H2O = S-adenosyl-L-methionine + phosphate + diphosphate. Its pathway is amino-acid biosynthesis; S-adenosyl-L-methionine biosynthesis; S-adenosyl-L-methionine from L-methionine: step 1/1. Functionally, catalyzes the formation of S-adenosylmethionine (AdoMet) from methionine and ATP. The overall synthetic reaction is composed of two sequential steps, AdoMet formation and the subsequent tripolyphosphate hydrolysis which occurs prior to release of AdoMet from the enzyme. The sequence is that of S-adenosylmethionine synthase from Chlorobaculum tepidum (strain ATCC 49652 / DSM 12025 / NBRC 103806 / TLS) (Chlorobium tepidum).